The sequence spans 470 residues: Aminodeoxychorismate synthase component 1 (470 aa).

The protein belongs to the anthranilate synthase component I family. As to quaternary structure, monomer. Heterodimer consisting of two non-identical subunits: a glutamine amidotransferase subunit (PabA) and a aminodeoxychorismate synthase subunit (PabB). Requires Mg(2+) as cofactor.

It carries out the reaction chorismate + L-glutamine = 4-amino-4-deoxychorismate + L-glutamate. It functions in the pathway cofactor biosynthesis; tetrahydrofolate biosynthesis; 4-aminobenzoate from chorismate: step 1/2. Part of a heterodimeric complex that catalyzes the two-step biosynthesis of 4-amino-4-deoxychorismate (ADC), a precursor of p-aminobenzoate (PABA) and tetrahydrofolate. In the first step, a glutamine amidotransferase (PabA) generates ammonia as a substrate that, along with chorismate, is used in the second step, catalyzed by aminodeoxychorismate synthase (PabB) to produce ADC. The sequence is that of Aminodeoxychorismate synthase component 1 (pabB) from Lactococcus lactis subsp. lactis (Streptococcus lactis).